A 201-amino-acid chain; its full sequence is MLLSDRDITAELDAGRVALDPYDPGMLQPASIDVRIDRFFRLFDNHKYPYIDPAEDQPELTRLIESKPGEPFILHPGEFVLGSTFELVTLPDDVAARLEGKSSLGRLGLLTHSTAGFIDPGFSGHVTLELSNVATLPIKLWPGMKIGQLCFFRLSSPAKKPYGSGEYASRYQGQRGPTASRSHLNFVHTDVTVTDAGQQGE.

DCTP-binding positions include Lys-101–Arg-106, Asp-119, Thr-127–Glu-129, Gln-148, Tyr-162, and Gln-174. The Proton donor/acceptor role is filled by Glu-129.

This sequence belongs to the dCTP deaminase family. As to quaternary structure, homotrimer.

It carries out the reaction dCTP + 2 H2O = dUMP + NH4(+) + diphosphate. It functions in the pathway pyrimidine metabolism; dUMP biosynthesis; dUMP from dCTP: step 1/1. Bifunctional enzyme that catalyzes both the deamination of dCTP to dUTP and the hydrolysis of dUTP to dUMP without releasing the toxic dUTP intermediate. In Clavibacter michiganensis subsp. michiganensis (strain NCPPB 382), this protein is dCTP deaminase, dUMP-forming.